The chain runs to 424 residues: Nicotinate phosphoribosyltransferase (424 aa).

Position 242 is a phosphohistidine; by autocatalysis (His-242).

The protein belongs to the NAPRTase family. In terms of processing, transiently phosphorylated on a His residue during the reaction cycle. Phosphorylation strongly increases the affinity for substrates and increases the rate of nicotinate D-ribonucleotide production. Dephosphorylation regenerates the low-affinity form of the enzyme, leading to product release.

It catalyses the reaction nicotinate + 5-phospho-alpha-D-ribose 1-diphosphate + ATP + H2O = nicotinate beta-D-ribonucleotide + ADP + phosphate + diphosphate. It functions in the pathway cofactor biosynthesis; NAD(+) biosynthesis; nicotinate D-ribonucleotide from nicotinate: step 1/1. In terms of biological role, catalyzes the synthesis of beta-nicotinate D-ribonucleotide from nicotinate and 5-phospho-D-ribose 1-phosphate at the expense of ATP. The chain is Nicotinate phosphoribosyltransferase from Bartonella bacilliformis (strain ATCC 35685 / KC583 / Herrer 020/F12,63).